Here is a 525-residue protein sequence, read N- to C-terminus: Cytochrome P450 CYP72A613 (525 aa).

Residues 2 to 22 (VFLFPTGTIIIWVLTILLAVI) traverse the membrane as a helical segment. Cys-473 is a heme binding site.

Belongs to the cytochrome P450 family. As to expression, mainly expressed in leaves and seed pods and, to a lower extent, in flowers and stems.

Its subcellular location is the membrane. It functions in the pathway steroid metabolism; cholesterol metabolism. Involved in the biosynthesis of spiroketal steroid and saponin natural products from cholesterol such as diosgenin and analogs (e.g. furostanol and spirostanol), plant defense compounds used as main precursors for the industrial production of steroid hormones. During the 5,6-spiroketalization of cholesterol, may catalyze the 27-monohydroxylation of furostanol-type steroid to an intermediate product that undergoes a stereospecific formation of the terminal heterocycle to yield diosgenin. The protein is Cytochrome P450 CYP72A613 of Trigonella foenum-graecum (Fenugreek).